The chain runs to 866 residues: Leucine--tRNA ligase (866 aa).

The 'HIGH' region motif lies at 59-69 (PYPSGDLHMGH). A disordered region spans residues 393-421 (VPVIKTDPQTGEPLLPESAPLESPAETGQ). Residues 404 to 418 (EPLLPESAPLESPAE) are compositionally biased toward low complexity. Residues 628 to 632 (AMSKS) carry the 'KMSKS' region motif. ATP is bound at residue lysine 631.

It belongs to the class-I aminoacyl-tRNA synthetase family.

Its subcellular location is the cytoplasm. The enzyme catalyses tRNA(Leu) + L-leucine + ATP = L-leucyl-tRNA(Leu) + AMP + diphosphate. This is Leucine--tRNA ligase from Leifsonia xyli subsp. xyli (strain CTCB07).